The primary structure comprises 355 residues: N-acetyl-gamma-glutamyl-phosphate reductase (355 aa).

Cysteine 152 is a catalytic residue.

Belongs to the NAGSA dehydrogenase family. Type 1 subfamily.

It localises to the cytoplasm. It catalyses the reaction N-acetyl-L-glutamate 5-semialdehyde + phosphate + NADP(+) = N-acetyl-L-glutamyl 5-phosphate + NADPH + H(+). It functions in the pathway amino-acid biosynthesis; L-arginine biosynthesis; N(2)-acetyl-L-ornithine from L-glutamate: step 3/4. Functionally, catalyzes the NADPH-dependent reduction of N-acetyl-5-glutamyl phosphate to yield N-acetyl-L-glutamate 5-semialdehyde. This chain is N-acetyl-gamma-glutamyl-phosphate reductase, found in Psychrobacter sp. (strain PRwf-1).